Reading from the N-terminus, the 122-residue chain is Large ribosomal subunit protein uL14 (122 aa).

This sequence belongs to the universal ribosomal protein uL14 family. As to quaternary structure, part of the 50S ribosomal subunit. Forms a cluster with proteins L3 and L19. In the 70S ribosome, L14 and L19 interact and together make contacts with the 16S rRNA in bridges B5 and B8.

Functionally, binds to 23S rRNA. Forms part of two intersubunit bridges in the 70S ribosome. In Ligilactobacillus salivarius (strain UCC118) (Lactobacillus salivarius), this protein is Large ribosomal subunit protein uL14.